Consider the following 999-residue polypeptide: Caspase recruitment domain-containing protein 14 (999 aa).

In terms of domain architecture, CARD spans 15 to 107 (DEEMLWDMLE…DVYTLVTGLQ (93 aa)). A coiled-coil region spans residues 125 to 411 (TECLAGAISS…QLRRLQAEAP (287 aa)). The interval 409-565 (EAPGGPKQEA…RRPARKILSQ (157 aa)) is maintains the protein in an inactive state. Serine 541 is modified (phosphoserine). The PDZ domain maps to 572-655 (QGDALLEQIG…SCYLSVKINT (84 aa)). Residues 803–986 (SESCFTLAPY…LLSCVRLAIA (184 aa)) form the Guanylate kinase-like domain.

As to quaternary structure, interacts (via CARD domain) with BCL10 (via CARD domain). Forms a complex with MALT1 and BCL10; resulting in the formation of a CBM (CARD14-BLC10-MALT1) complex. Interacts with TRAF2, TRAF3 and TRAF6.

The protein localises to the cytoplasm. Its function is as follows. Acts as a scaffolding protein that can activate the inflammatory transcription factor NF-kappa-B and p38/JNK MAP kinase signaling pathways. Forms a signaling complex with BCL10 and MALT1, and activates MALT1 proteolytic activity and inflammatory gene expression. MALT1 is indispensable for CARD14-induced activation of NF-kappa-B and p38/JNK MAP kinases. May play a role in signaling mediated by TRAF2, TRAF3 and TRAF6 and protects cells against apoptosis. The protein is Caspase recruitment domain-containing protein 14 (Card14) of Mus musculus (Mouse).